A 500-amino-acid polypeptide reads, in one-letter code: Coiled-coil domain-containing protein 125 (500 aa).

The disordered stretch occupies residues methionine 1–glutamate 105. A compositionally biased stretch (acidic residues) spans glutamate 10–glutamate 23. The segment covering arginine 92 to glutamate 101 has biased composition (polar residues). 2 coiled-coil regions span residues glutamate 101 to leucine 237 and serine 286 to alanine 314. Serine 492 is subject to Phosphoserine.

As to expression, expressed in many tissues, with highest levels in spleen, thymus and bone marrow.

The protein resides in the cytoplasm. In terms of biological role, may be involved in the regulation of cell migration. The polypeptide is Coiled-coil domain-containing protein 125 (Ccdc125) (Mus musculus (Mouse)).